The sequence spans 202 residues: Glycerol-3-phosphate acyltransferase (202 aa).

Helical transmembrane passes span 2-22 (MIVL…GVII), 54-74 (FVVT…PLLF), 85-105 (FFTN…YPIF), 118-138 (AGVV…IFFL), 140-160 (LYLT…CVIG), and 162-182 (LIIH…LLIF).

It belongs to the PlsY family. Probably interacts with PlsX.

It is found in the cell membrane. The catalysed reaction is an acyl phosphate + sn-glycerol 3-phosphate = a 1-acyl-sn-glycero-3-phosphate + phosphate. The protein operates within lipid metabolism; phospholipid metabolism. Catalyzes the transfer of an acyl group from acyl-phosphate (acyl-PO(4)) to glycerol-3-phosphate (G3P) to form lysophosphatidic acid (LPA). This enzyme utilizes acyl-phosphate as fatty acyl donor, but not acyl-CoA or acyl-ACP. This Staphylococcus carnosus (strain TM300) protein is Glycerol-3-phosphate acyltransferase.